A 142-amino-acid polypeptide reads, in one-letter code: Hemoglobin subunit zeta (142 aa).

N-acetylserine is present on Ser2. One can recognise a Globin domain in the interval 2-142 (SLMKNERAII…LSSILTEKYR (141 aa)). Thr29 carries the phosphothreonine modification. At Ser53 the chain carries Phosphoserine. Position 59 (His59) interacts with heme b. Ser73 carries the post-translational modification Phosphoserine. His88 lines the heme b pocket.

Belongs to the globin family. In terms of assembly, heterotetramer of two zeta chains and beta-type chains.

The zeta chain is an alpha-type chain of mammalian embryonic hemoglobin. The protein is Hemoglobin subunit zeta (Hbz) of Mus musculus (Mouse).